The sequence spans 1357 residues: DNA-directed RNA polymerase subunit beta (1357 aa).

It belongs to the RNA polymerase beta chain family. The RNAP catalytic core consists of 2 alpha, 1 beta, 1 beta' and 1 omega subunit. When a sigma factor is associated with the core the holoenzyme is formed, which can initiate transcription.

The catalysed reaction is RNA(n) + a ribonucleoside 5'-triphosphate = RNA(n+1) + diphosphate. Its function is as follows. DNA-dependent RNA polymerase catalyzes the transcription of DNA into RNA using the four ribonucleoside triphosphates as substrates. This Pseudomonas aeruginosa (strain ATCC 15692 / DSM 22644 / CIP 104116 / JCM 14847 / LMG 12228 / 1C / PRS 101 / PAO1) protein is DNA-directed RNA polymerase subunit beta.